We begin with the raw amino-acid sequence, 657 residues long: Transmembrane protein 232 (657 aa).

A run of 2 helical transmembrane segments spans residues 168-188 and 353-373; these read IGYL…LESF and WAWN…LYAA.

The protein resides in the membrane. In terms of biological role, plays a critical role for male fertility and sperm motility by regulating sperm cytoplasm removal and maintaining axoneme integrity. The polypeptide is Transmembrane protein 232 (TMEM232) (Homo sapiens (Human)).